Reading from the N-terminus, the 261-residue chain is tRNA pseudouridine synthase A (261 aa).

Residue Asp-51 is the Nucleophile of the active site. Tyr-109 lines the substrate pocket.

The protein belongs to the tRNA pseudouridine synthase TruA family. As to quaternary structure, homodimer.

It carries out the reaction uridine(38/39/40) in tRNA = pseudouridine(38/39/40) in tRNA. Its function is as follows. Formation of pseudouridine at positions 38, 39 and 40 in the anticodon stem and loop of transfer RNAs. The sequence is that of tRNA pseudouridine synthase A from Photobacterium profundum (strain SS9).